A 217-amino-acid polypeptide reads, in one-letter code: External core antigen (217 aa).

An N-terminal signal peptide occupies residues 1 to 20; the sequence is MYLFHLCLVFACVSCPTVQA. Residues 26–28 form an HBEAG region; it reads GWL. The segment covering 181 to 210 has biased composition (basic residues); that stretch reads RRGSARVVRSPRRRTPSPRRRRSQSPRRRP. A disordered region spans residues 181 to 217; it reads RRGSARVVRSPRRRTPSPRRRRSQSPRRRPQSPASNC. One copy of the 1; half-length repeat lies at 190-196; that stretch reads SPRRRTP. Residues 190 to 211 form a 3 X 8 AA approximate repeats of S-P-R-R-R-R-[PS]-Q region; that stretch reads SPRRRTPSPRRRRSQSPRRRPQ. The propeptide occupies 190–217; it reads SPRRRTPSPRRRRSQSPRRRPQSPASNC. Repeat copies occupy residues 197-204 and 205-211.

The protein belongs to the orthohepadnavirus precore antigen family. In terms of assembly, homodimerizes. Phosphorylated. In terms of processing, cleaved by host furin.

It is found in the secreted. Its subcellular location is the host nucleus. Functionally, may regulate immune response to the intracellular capsid in acting as a T-cell tolerogen, by having an immunoregulatory effect which prevents destruction of infected cells by cytotoxic T-cells. This immune regulation may predispose to chronicity during perinatal infections and prevent severe liver injury during adult infections. The protein is External core antigen of Urocitellus parryii kennicottii (ASHV).